The sequence spans 96 residues: MTIIASIITLSNPKQSTTGSVSTVSAAFKFGSNSVSCGGSSGSGSGLLGGNKGLLGLLGGLGGSPNSKVGVNIGGGMGPQTGSMMGGGQPNYCGCN.

Belongs to the hssA/B family.

The sequence is that of HssA/B-like protein 25 (hssl25) from Dictyostelium discoideum (Social amoeba).